The primary structure comprises 180 residues: Translation initiation factor IF-3 (180 aa).

This sequence belongs to the IF-3 family. As to quaternary structure, monomer.

Its subcellular location is the cytoplasm. IF-3 binds to the 30S ribosomal subunit and shifts the equilibrium between 70S ribosomes and their 50S and 30S subunits in favor of the free subunits, thus enhancing the availability of 30S subunits on which protein synthesis initiation begins. The chain is Translation initiation factor IF-3 from Caldanaerobacter subterraneus subsp. tengcongensis (strain DSM 15242 / JCM 11007 / NBRC 100824 / MB4) (Thermoanaerobacter tengcongensis).